The following is a 316-amino-acid chain: MKARNESMSKGEYKTKSLKNRPDPTQPKLKKPSWIKAKLPSAKHIGRVKELKQVLREQGLNSVCEEASCPNLGECFGHGTATFMIMGHICTRKCPFCDVTHGRPNPLNQDEPRHLAKTIHAMNLNYVVITSVDRDDLRDGGATHFKNCTQAIRDKMPDIQIETLVPDFRGRLTVALDILAQQAPDVLNHNLETVPRLYEEARPGADYQASLDLLKRFKQMVPETKTKSGLMVGLGETFDEILQVMRDLRAHDVEMLTVGQYLQPSDFHLAVQRYWTPEEFKQLEQAGMEMGFTHVASGPMVRSSYHADLQAQGQFS.

Residues 1–15 (MKARNESMSKGEYKT) are compositionally biased toward basic and acidic residues. The interval 1 to 33 (MKARNESMSKGEYKTKSLKNRPDPTQPKLKKPS) is disordered. Residues Cys64, Cys69, Cys75, Cys90, Cys94, Cys97, and Ser304 each coordinate [4Fe-4S] cluster. A Radical SAM core domain is found at 76–293 (FGHGTATFMI…EQAGMEMGFT (218 aa)).

The protein belongs to the radical SAM superfamily. Lipoyl synthase family. The cofactor is [4Fe-4S] cluster.

It localises to the cytoplasm. The catalysed reaction is [[Fe-S] cluster scaffold protein carrying a second [4Fe-4S](2+) cluster] + N(6)-octanoyl-L-lysyl-[protein] + 2 oxidized [2Fe-2S]-[ferredoxin] + 2 S-adenosyl-L-methionine + 4 H(+) = [[Fe-S] cluster scaffold protein] + N(6)-[(R)-dihydrolipoyl]-L-lysyl-[protein] + 4 Fe(3+) + 2 hydrogen sulfide + 2 5'-deoxyadenosine + 2 L-methionine + 2 reduced [2Fe-2S]-[ferredoxin]. It participates in protein modification; protein lipoylation via endogenous pathway; protein N(6)-(lipoyl)lysine from octanoyl-[acyl-carrier-protein]: step 2/2. Its function is as follows. Catalyzes the radical-mediated insertion of two sulfur atoms into the C-6 and C-8 positions of the octanoyl moiety bound to the lipoyl domains of lipoate-dependent enzymes, thereby converting the octanoylated domains into lipoylated derivatives. This is Lipoyl synthase from Hydrogenovibrio crunogenus (strain DSM 25203 / XCL-2) (Thiomicrospira crunogena).